We begin with the raw amino-acid sequence, 300 residues long: Inosose dehydratase (300 aa).

It belongs to the IolE/MocC family. It depends on glutathione as a cofactor. Requires Co(2+) as cofactor. The cofactor is Mn(2+).

The enzyme catalyses scyllo-inosose = 3D-3,5/4-trihydroxycyclohexane-1,2-dione + H2O. Catalyzes the dehydration of inosose (2-keto-myo-inositol, 2KMI or 2,4,6/3,5-pentahydroxycyclohexanone) to 3D-(3,5/4)-trihydroxycyclohexane-1,2-dione (D-2,3-diketo-4-deoxy-epi-inositol). This Mesomycoplasma hyopneumoniae (strain J / ATCC 25934 / NCTC 10110) (Mycoplasma hyopneumoniae) protein is Inosose dehydratase.